A 151-amino-acid polypeptide reads, in one-letter code: Probable transcriptional regulator syrB3 (151 aa).

Residues 1 to 65 (MVDESNAGPV…QERSEKLRLI (65 aa)) are disordered. The span at 7–23 (AGPVAPAVVADAEVKAP) shows a compositional bias: low complexity. The span at 52 to 65 (GYSEQERSEKLRLI) shows a compositional bias: basic and acidic residues.

The protein belongs to the SyrB family.

This Rhizobium meliloti (strain 1021) (Ensifer meliloti) protein is Probable transcriptional regulator syrB3 (syrB3).